Consider the following 316-residue polypeptide: Protease HtpX homolog (316 aa).

The chain crosses the membrane as a helical span at residues 16 to 36 (LFMGAGFLIGGATGMMIALVF). H134 serves as a coordination point for Zn(2+). E135 is a catalytic residue. Zn(2+) is bound at residue H138. The next 2 membrane-spanning stretches (helical) occupy residues 149-169 (VTAT…FFGG) and 180-200 (LGGM…AMLV). Residue E209 participates in Zn(2+) binding. Residues 295-316 (PVMAATTSSSVPLSGERGGPWS) form a disordered region.

This sequence belongs to the peptidase M48B family. Zn(2+) serves as cofactor.

The protein resides in the cell inner membrane. This is Protease HtpX homolog from Caulobacter vibrioides (strain ATCC 19089 / CIP 103742 / CB 15) (Caulobacter crescentus).